The primary structure comprises 92 residues: Small ribosomal subunit protein uS19 (92 aa).

Belongs to the universal ribosomal protein uS19 family.

Functionally, protein S19 forms a complex with S13 that binds strongly to the 16S ribosomal RNA. This chain is Small ribosomal subunit protein uS19, found in Chromobacterium violaceum (strain ATCC 12472 / DSM 30191 / JCM 1249 / CCUG 213 / NBRC 12614 / NCIMB 9131 / NCTC 9757 / MK).